The following is a 274-amino-acid chain: Penicillin-insensitive murein endopeptidase (274 aa).

The signal sequence occupies residues 1–19 (MKKTAIALLAWFVSSASLA). 3 disulfide bridges follow: cysteine 44-cysteine 265, cysteine 187-cysteine 235, and cysteine 216-cysteine 223. Residues histidine 110, histidine 113, aspartate 120, aspartate 147, histidine 150, and histidine 211 each coordinate Zn(2+). Residues 225–274 (DQPLPPPGDGCGAELQSWFEPPKPGTTKPEKKTPPPLPPSCQALLDEHVL) are disordered.

This sequence belongs to the peptidase M74 family. Dimer. The cofactor is Zn(2+).

It is found in the periplasm. Its function is as follows. Murein endopeptidase that cleaves the D-alanyl-meso-2,6-diamino-pimelyl amide bond that connects peptidoglycan strands. Likely plays a role in the removal of murein from the sacculus. This chain is Penicillin-insensitive murein endopeptidase, found in Salmonella heidelberg (strain SL476).